Here is a 616-residue protein sequence, read N- to C-terminus: MKQSKMLIPTLREMPSDAQVISHALLMRAGYVRQVSAGIYAYLPLANRVLEKLKNIMREEFDEIGAVELLAPSLLTADLWRESGRYETYGEDLYKLKNRDSSDFILGPTHEETMTSLVRDEITSYKKLPLNVYQIATKFRDEKRPRYGLLRGREFLMKDGYSYHADQDSLDETYLDYKKSYEKIFERAGLNFKPIIADAGAMGGKDSQEFIAITDDRINLEKWLVLSKNITSIDEIPESVLSEIQEELGKWLVAGEDTIVYAEGGDYAANIEMATSQFEPNVAYTEELELEKVATPGAKTIDEVSDFLEIDEEQTVKTLVYHADDELIVILLNGNDQLNEVKLTNRLGASFIEAASEAEVEEKFGAHFGSLGPIGLENVRIIADRKVELIKNAVVGANVDGYHYKNANFGRDFEVEEFVDLRTVNEGEISPDGRGTLKFARGIEIGHIFKLGTRYTEAMNANILDANGRSIPMLMGCYGIGVSRLLSAILEQFARIYVEKTPREEFKFSWSINFPKELAPFDIHLVPVNVKDEAAMELTSELEEKLRGKGYQVLVDDRNERAGVKFADSDLIGLPVRVTIGKKAAEGIVEVKIRATGEVVEINKDELVNTIEILSK.

Belongs to the class-II aminoacyl-tRNA synthetase family. ProS type 1 subfamily. As to quaternary structure, homodimer.

The protein resides in the cytoplasm. It catalyses the reaction tRNA(Pro) + L-proline + ATP = L-prolyl-tRNA(Pro) + AMP + diphosphate. Catalyzes the attachment of proline to tRNA(Pro) in a two-step reaction: proline is first activated by ATP to form Pro-AMP and then transferred to the acceptor end of tRNA(Pro). As ProRS can inadvertently accommodate and process non-cognate amino acids such as alanine and cysteine, to avoid such errors it has two additional distinct editing activities against alanine. One activity is designated as 'pretransfer' editing and involves the tRNA(Pro)-independent hydrolysis of activated Ala-AMP. The other activity is designated 'posttransfer' editing and involves deacylation of mischarged Ala-tRNA(Pro). The misacylated Cys-tRNA(Pro) is not edited by ProRS. This is Proline--tRNA ligase from Lactococcus lactis subsp. cremoris (strain SK11).